We begin with the raw amino-acid sequence, 378 residues long: Spermatogenic leucine zipper protein 1 (378 aa).

The disordered stretch occupies residues 1–31; the sequence is MSDTDNSAEMPARCPSPNPAPGAKQEPPNSG. Serine 106 carries the phosphoserine modification. The interaction with PPP1CC isoform gamma-2 stretch occupies residues 116 to 122; it reads KNKIRFK. Residues 116–127 form a helix-loop-helix motif region; it reads KNKIRFKDDLFI. The basic motif stretch occupies residues 128-193; the sequence is HFDPEREQNT…HLRGEYRKLR (66 aa). The stretch at 182 to 233 forms a coiled coil; it reads SLHLRGEYRKLRNNMEQLLQEADHWSKQHNELSELMRSYQECQNETQETTDK. Position 207 is a phosphoserine (serine 207). Residues 252-273 are leucine-zipper; sequence LEEQVKKLSHDTHALHLIAALL.

In terms of assembly, interacts with PPP1CC isoform gamma-2. This interaction can prevent SPZ1 binding to the E-box and inhibits PPP1CC activity. Phosphorylated by MAPK1/ERK2 and MAPK3/ERK1. In terms of tissue distribution, expressed specifically in the testis and epidydimis. In the testis expressed in both germ cells and somatic cells (Sertoli and Leydig cells). Expressed in several tumor cell lines.

Its subcellular location is the cytoplasm. The protein resides in the nucleus. In terms of biological role, transcription factor that binds to the DNA sequence 5'-CANNTG-3'(E box) and the G-box motif. Directly binds to a guanine-rich region of the PCNA promoter and up-regulates its expression which in turn induces cell transformation and tumor formation. May play an important role in the regulation of cell proliferation and differentiation during spermatogenesis. The polypeptide is Spermatogenic leucine zipper protein 1 (Spz1) (Mus musculus (Mouse)).